The following is a 288-amino-acid chain: Protease HtpX homolog (288 aa).

The next 2 helical transmembrane spans lie at T7–G27 and Q29–S49. Residue H131 participates in Zn(2+) binding. The active site involves E132. Residue H135 participates in Zn(2+) binding. 2 helical membrane passes run I141–A161 and I177–I197. E202 is a Zn(2+) binding site.

It belongs to the peptidase M48B family. Zn(2+) serves as cofactor.

It localises to the cell inner membrane. The polypeptide is Protease HtpX homolog (Polynucleobacter necessarius subsp. necessarius (strain STIR1)).